Reading from the N-terminus, the 255-residue chain is Small ribosomal subunit protein uS2 (255 aa).

The segment at 231-255 (RLQTGAEEEFSTEGEEVVEETPAEA) is disordered. The span at 236 to 255 (AEEEFSTEGEEVVEETPAEA) shows a compositional bias: acidic residues.

The protein belongs to the universal ribosomal protein uS2 family.

The polypeptide is Small ribosomal subunit protein uS2 (Geobacter sp. (strain M21)).